Here is a 368-residue protein sequence, read N- to C-terminus: Chorismate synthase (368 aa).

Residue Arg46 participates in NADP(+) binding. Residues 124–126, Gly284, 299–303, and Arg326 contribute to the FMN site; these read RAS and KPTPS.

Belongs to the chorismate synthase family. FMNH2 is required as a cofactor.

The enzyme catalyses 5-O-(1-carboxyvinyl)-3-phosphoshikimate = chorismate + phosphate. The protein operates within metabolic intermediate biosynthesis; chorismate biosynthesis; chorismate from D-erythrose 4-phosphate and phosphoenolpyruvate: step 7/7. Catalyzes the anti-1,4-elimination of the C-3 phosphate and the C-6 proR hydrogen from 5-enolpyruvylshikimate-3-phosphate (EPSP) to yield chorismate, which is the branch point compound that serves as the starting substrate for the three terminal pathways of aromatic amino acid biosynthesis. This reaction introduces a second double bond into the aromatic ring system. This is Chorismate synthase from Pyrobaculum arsenaticum (strain DSM 13514 / JCM 11321 / PZ6).